The following is a 475-amino-acid chain: UDP-N-acetylmuramate--L-alanine ligase (475 aa).

117–123 (GTHGKTT) is a binding site for ATP.

The protein belongs to the MurCDEF family.

The protein resides in the cytoplasm. The catalysed reaction is UDP-N-acetyl-alpha-D-muramate + L-alanine + ATP = UDP-N-acetyl-alpha-D-muramoyl-L-alanine + ADP + phosphate + H(+). Its pathway is cell wall biogenesis; peptidoglycan biosynthesis. In terms of biological role, cell wall formation. In Chlorobaculum tepidum (strain ATCC 49652 / DSM 12025 / NBRC 103806 / TLS) (Chlorobium tepidum), this protein is UDP-N-acetylmuramate--L-alanine ligase.